The sequence spans 1921 residues: Endoribonuclease Dicer (1921 aa).

The region spanning 51–227 (LLEAALDHNT…ELEEKIKKLE (177 aa)) is the Helicase ATP-binding domain. 64–71 (LNTGSGKT) lines the ATP pocket. The DECH box signature appears at 175–178 (DECH). The interval 409 to 433 (YVSWSDSEDDDEDEEIEEKEKPETN) is disordered. A compositionally biased stretch (acidic residues) spans 414–425 (DSEDDDEDEEIE). The 170-residue stretch at 433 to 602 (NFPSPFTNIL…SVDTSETETE (170 aa)) folds into the Helicase C-terminal domain. In terms of domain architecture, Dicer dsRNA-binding fold spans 630-722 (AIGHINRYCA…MPVGKETVKY (93 aa)). The segment at 727 to 746 (DLHDEEETSVPGRPGSTKRR) is disordered. The 148-residue stretch at 895–1042 (KFMEDIEKSE…LVPELCAIHP (148 aa)) folds into the PAZ domain. The disordered stretch occupies residues 1270–1289 (NLSKDKVDSEKNTSSGYSSK). RNase III domains are found at residues 1277–1404 (DSEK…EETT) and 1665–1823 (FENF…MDSG). 4 residues coordinate Mg(2+): E1317, D1396, E1399, and E1704. The disordered stretch occupies residues 1782-1801 (QGMDSELRRSEEDEEKEEDI). 2 residues coordinate Mg(2+): D1809 and E1812. The DRBM domain maps to 1848–1913 (VPRSPVRELL…ARRALRSLKA (66 aa)).

This sequence belongs to the helicase family. Dicer subfamily. In terms of assembly, component of the RISC loading complex (RLC), or micro-RNA (miRNA) loading complex (miRLC), which is composed of DICER1, AGO2 and TARBP2; DICER1 and TARBP2 are required to process precursor miRNAs (pre-miRNAs) to mature miRNAs and then load them onto AGO2. Note that the trimeric RLC/miRLC is also referred to as RISC. Mg(2+) serves as cofactor. The cofactor is Mn(2+).

The protein localises to the cytoplasm. It catalyses the reaction Endonucleolytic cleavage to 5'-phosphomonoester.. In terms of biological role, double-stranded RNA (dsRNA) endoribonuclease playing a central role in short dsRNA-mediated post-transcriptional gene silencing. Cleaves naturally occurring long dsRNAs and short hairpin pre-microRNAs (miRNA) into fragments of twenty-one to twenty-three nucleotides with 3' overhang of two nucleotides, producing respectively short interfering RNAs (siRNA) and mature microRNAs. SiRNAs and miRNAs serve as guide to direct the RNA-induced silencing complex (RISC) to complementary RNAs to degrade them or prevent their translation. Gene silencing mediated by siRNAs, also called RNA interference, controls the elimination of transcripts from mobile and repetitive DNA elements of the genome but also the degradation of exogenous RNA of viral origin for instance. The miRNA pathway on the other side is a mean to specifically regulate the expression of target genes. This is Endoribonuclease Dicer (DICER1) from Gallus gallus (Chicken).